An 833-amino-acid chain; its full sequence is Phenylalanine--tRNA ligase beta subunit (833 aa).

Residues 42–157 form the tRNA-binding domain; it reads ADLKGPLAVG…PEYEVGTDAI (116 aa). Residues 411-485 form the B5 domain; it reads SAPHTITIPA…RLEGYENLPS (75 aa). The Mg(2+) site is built by aspartate 463, aspartate 469, glutamate 472, and glutamate 473. Residues 739 to 832 form the FDX-ACB domain; that stretch reads STFPVATQDV…AAERTGAALR (94 aa).

Belongs to the phenylalanyl-tRNA synthetase beta subunit family. Type 1 subfamily. As to quaternary structure, tetramer of two alpha and two beta subunits. Mg(2+) serves as cofactor.

The protein localises to the cytoplasm. It catalyses the reaction tRNA(Phe) + L-phenylalanine + ATP = L-phenylalanyl-tRNA(Phe) + AMP + diphosphate + H(+). The sequence is that of Phenylalanine--tRNA ligase beta subunit from Streptomyces avermitilis (strain ATCC 31267 / DSM 46492 / JCM 5070 / NBRC 14893 / NCIMB 12804 / NRRL 8165 / MA-4680).